The primary structure comprises 314 residues: Acetyl-coenzyme A carboxylase carboxyl transferase subunit alpha (314 aa).

The 258-residue stretch at 32–289 folds into the CoA carboxyltransferase C-terminal domain; sequence EIDMLEASLK…KKMFLKHLNE (258 aa).

Belongs to the AccA family. In terms of assembly, acetyl-CoA carboxylase is a heterohexamer composed of biotin carboxyl carrier protein (AccB), biotin carboxylase (AccC) and two subunits each of ACCase subunit alpha (AccA) and ACCase subunit beta (AccD).

The protein localises to the cytoplasm. The enzyme catalyses N(6)-carboxybiotinyl-L-lysyl-[protein] + acetyl-CoA = N(6)-biotinyl-L-lysyl-[protein] + malonyl-CoA. It functions in the pathway lipid metabolism; malonyl-CoA biosynthesis; malonyl-CoA from acetyl-CoA: step 1/1. Its function is as follows. Component of the acetyl coenzyme A carboxylase (ACC) complex. First, biotin carboxylase catalyzes the carboxylation of biotin on its carrier protein (BCCP) and then the CO(2) group is transferred by the carboxyltransferase to acetyl-CoA to form malonyl-CoA. This chain is Acetyl-coenzyme A carboxylase carboxyl transferase subunit alpha, found in Staphylococcus epidermidis (strain ATCC 12228 / FDA PCI 1200).